Consider the following 64-residue polypeptide: Translational regulator CsrA (64 aa).

This sequence belongs to the CsrA/RsmA family. Homodimer; the beta-strands of each monomer intercalate to form a hydrophobic core, while the alpha-helices form wings that extend away from the core.

Its subcellular location is the cytoplasm. Its function is as follows. A key translational regulator that binds mRNA to regulate translation initiation and/or mRNA stability. Mediates global changes in gene expression, shifting from rapid growth to stress survival by linking envelope stress, the stringent response and the catabolite repression systems. Usually binds in the 5'-UTR; binding at or near the Shine-Dalgarno sequence prevents ribosome-binding, repressing translation, binding elsewhere in the 5'-UTR can activate translation and/or stabilize the mRNA. Its function is antagonized by small RNA(s). This is Translational regulator CsrA from Actinobacillus pleuropneumoniae serotype 5b (strain L20).